Consider the following 143-residue polypeptide: Large ribosomal subunit protein uL15 (143 aa).

The disordered stretch occupies residues 1 to 57 (MQLNNLKPAAGSKHAKRRVGRGIGSGLGKTAGRGHKGQKSRSGGFHKVGFEGGQMPL). Positions 21 to 31 (RGIGSGLGKTA) are enriched in gly residues.

This sequence belongs to the universal ribosomal protein uL15 family. In terms of assembly, part of the 50S ribosomal subunit.

In terms of biological role, binds to the 23S rRNA. This Ralstonia pickettii (strain 12J) protein is Large ribosomal subunit protein uL15.